We begin with the raw amino-acid sequence, 204 residues long: Putative copper-binding protein (204 aa).

3 residues coordinate Cu cation: C77, C81, and H166.

This sequence belongs to the SCO1/2 family.

The sequence is that of Putative copper-binding protein (scoP) from Stutzerimonas stutzeri (Pseudomonas stutzeri).